The primary structure comprises 618 residues: Methionine--tRNA ligase (618 aa).

Residues 12 to 22 carry the 'HIGH' region motif; that stretch reads YYVNAEPHLGH. Zn(2+)-binding residues include Cys-127, Cys-130, Cys-144, and His-147. The 'KMSKS' region signature appears at 297–301; the sequence is KMSKT. ATP is bound at residue Lys-300. A tRNA-binding domain is found at 518–618; sequence DFAKVELRVA…GEVPPGAVVK (101 aa).

It belongs to the class-I aminoacyl-tRNA synthetase family. MetG type 2A subfamily. Homodimer. Zn(2+) serves as cofactor.

It localises to the cytoplasm. It catalyses the reaction tRNA(Met) + L-methionine + ATP = L-methionyl-tRNA(Met) + AMP + diphosphate. Its function is as follows. Is required not only for elongation of protein synthesis but also for the initiation of all mRNA translation through initiator tRNA(fMet) aminoacylation. The polypeptide is Methionine--tRNA ligase (metG) (Thermus thermophilus (strain ATCC 27634 / DSM 579 / HB8)).